The sequence spans 138 residues: MAEMTVQIVTPDGLKYDHHAKFILVKTPNGELGVLANHENLIAPLEVHEMKIKRIDDDSHVDWVAVNGGIIEIKDNLVTIVADSAERERDIDLSRAERAKKRAEKAIEEAKEQHRIDEVQRAQVALRRALNRINVGSK.

The protein belongs to the ATPase epsilon chain family. As to quaternary structure, F-type ATPases have 2 components, CF(1) - the catalytic core - and CF(0) - the membrane proton channel. CF(1) has five subunits: alpha(3), beta(3), gamma(1), delta(1), epsilon(1). CF(0) has three main subunits: a, b and c.

The protein localises to the cell membrane. Its function is as follows. Produces ATP from ADP in the presence of a proton gradient across the membrane. This chain is ATP synthase epsilon chain (atpC), found in Streptococcus mutans serotype c (strain ATCC 700610 / UA159).